We begin with the raw amino-acid sequence, 506 residues long: Probable Xaa-Pro aminopeptidase PADG_06815 (506 aa).

Mn(2+) is bound by residues Asp-285, Asp-296, Glu-433, and Glu-471.

It belongs to the peptidase M24B family. It depends on Mn(2+) as a cofactor.

The enzyme catalyses Release of any N-terminal amino acid, including proline, that is linked to proline, even from a dipeptide or tripeptide.. In terms of biological role, catalyzes the removal of a penultimate prolyl residue from the N-termini of peptides. The polypeptide is Probable Xaa-Pro aminopeptidase PADG_06815 (Paracoccidioides brasiliensis (strain Pb18)).